A 191-amino-acid polypeptide reads, in one-letter code: Pyridoxal 5'-phosphate synthase subunit PdxT (191 aa).

An L-glutamine-binding site is contributed by 46–48 (GES). Catalysis depends on Cys78, which acts as the Nucleophile. L-glutamine-binding positions include Arg105 and 133 to 134 (IR). Catalysis depends on charge relay system residues His169 and Glu171.

It belongs to the glutaminase PdxT/SNO family. In the presence of PdxS, forms a dodecamer of heterodimers. Only shows activity in the heterodimer.

It carries out the reaction aldehydo-D-ribose 5-phosphate + D-glyceraldehyde 3-phosphate + L-glutamine = pyridoxal 5'-phosphate + L-glutamate + phosphate + 3 H2O + H(+). It catalyses the reaction L-glutamine + H2O = L-glutamate + NH4(+). It participates in cofactor biosynthesis; pyridoxal 5'-phosphate biosynthesis. Catalyzes the hydrolysis of glutamine to glutamate and ammonia as part of the biosynthesis of pyridoxal 5'-phosphate. The resulting ammonia molecule is channeled to the active site of PdxS. In Brevibacillus brevis (strain 47 / JCM 6285 / NBRC 100599), this protein is Pyridoxal 5'-phosphate synthase subunit PdxT.